We begin with the raw amino-acid sequence, 120 residues long: Peptidyl-tRNA hydrolase (120 aa).

The protein belongs to the PTH2 family.

Its subcellular location is the cytoplasm. It carries out the reaction an N-acyl-L-alpha-aminoacyl-tRNA + H2O = an N-acyl-L-amino acid + a tRNA + H(+). The natural substrate for this enzyme may be peptidyl-tRNAs which drop off the ribosome during protein synthesis. The polypeptide is Peptidyl-tRNA hydrolase (Pyrobaculum aerophilum (strain ATCC 51768 / DSM 7523 / JCM 9630 / CIP 104966 / NBRC 100827 / IM2)).